The sequence spans 498 residues: ATP synthase subunit beta, chloroplastic (498 aa).

172–179 is a binding site for ATP; it reads GGAGVGKT.

Belongs to the ATPase alpha/beta chains family. In terms of assembly, F-type ATPases have 2 components, CF(1) - the catalytic core - and CF(0) - the membrane proton channel. CF(1) has five subunits: alpha(3), beta(3), gamma(1), delta(1), epsilon(1). CF(0) has four main subunits: a(1), b(1), b'(1) and c(9-12).

It is found in the plastid. Its subcellular location is the chloroplast thylakoid membrane. It catalyses the reaction ATP + H2O + 4 H(+)(in) = ADP + phosphate + 5 H(+)(out). Its function is as follows. Produces ATP from ADP in the presence of a proton gradient across the membrane. The catalytic sites are hosted primarily by the beta subunits. The polypeptide is ATP synthase subunit beta, chloroplastic (Atropa belladonna (Belladonna)).